The primary structure comprises 242 residues: Argininosuccinate synthase (242 aa).

It belongs to the argininosuccinate synthase family. Type 2 subfamily. As to quaternary structure, homotetramer.

It localises to the cytoplasm. It catalyses the reaction L-citrulline + L-aspartate + ATP = 2-(N(omega)-L-arginino)succinate + AMP + diphosphate + H(+). The protein operates within amino-acid biosynthesis; L-arginine biosynthesis; L-arginine from L-ornithine and carbamoyl phosphate: step 2/3. This is Argininosuccinate synthase (argG) from Dickeya chrysanthemi (Pectobacterium chrysanthemi).